A 205-amino-acid chain; its full sequence is Small ribosomal subunit protein uS4 (205 aa).

In terms of domain architecture, S4 RNA-binding spans 94–157 (SRLDAVVYRA…RNLALVLEAL (64 aa)).

This sequence belongs to the universal ribosomal protein uS4 family. Part of the 30S ribosomal subunit. Contacts protein S5. The interaction surface between S4 and S5 is involved in control of translational fidelity.

Functionally, one of the primary rRNA binding proteins, it binds directly to 16S rRNA where it nucleates assembly of the body of the 30S subunit. With S5 and S12 plays an important role in translational accuracy. The protein is Small ribosomal subunit protein uS4 of Hyphomonas neptunium (strain ATCC 15444).